The chain runs to 272 residues: Large ribosomal subunit protein uL2cz/uL2cy (272 aa).

Over residues 1–13 (MHLYKTSTPSTRN) the composition is skewed to polar residues. Disordered regions lie at residues 1 to 27 (MHLY…PRNN) and 222 to 272 (NPVD…RRSK).

It belongs to the universal ribosomal protein uL2 family. Part of the 50S ribosomal subunit.

The protein localises to the plastid. It localises to the chloroplast. This Buxus microphylla (Littleleaf boxwood) protein is Large ribosomal subunit protein uL2cz/uL2cy (rpl2-A).